A 400-amino-acid chain; its full sequence is Lysophospholipid transporter LplT (400 aa).

Transmembrane regions (helical) follow at residues 19–39 (VIVAQFLSAFGDNALLFATLA), 53–73 (VLQMVFVGAYILFAPFVGQIA), 91–111 (AGAAGICLGINPFVGYTLVGI), 139–159 (LMEASTIAAILLGSVAGGVLA), 164–184 (IAALVACALAYAGAVAANLFI), 195–213 (SWRLSAMTRSFFSACVVLW), 227–247 (LFWGAGVTLRFLLVLWVPVAL), 257–277 (YLNAMVAVGIVVGAGAAAKLV), 281–301 (TVSRCMPAGILIGVVVAIFSL), 304–324 (ALLPAYALLLLIGMLGGFFVV), 352–372 (NSAMLLMLGLYSLAVLVGVPA), and 373–393 (VAIGIGFGVLFALAIAALWIW).

This sequence belongs to the major facilitator superfamily. LplT (TC 2.A.1.42) family.

It localises to the cell inner membrane. Catalyzes the facilitated diffusion of 2-acyl-glycero-3-phosphoethanolamine (2-acyl-GPE) into the cell. This Salmonella newport (strain SL254) protein is Lysophospholipid transporter LplT.